A 1025-amino-acid polypeptide reads, in one-letter code: Glycine dehydrogenase (decarboxylating), mitochondrial (1025 aa).

Residues 1-35 (MQLCARAWGLRLGRGAGGGHRLARGTGLSWAQRSR) constitute a mitochondrion transit peptide. Positions 16–51 (AGGGHRLARGTGLSWAQRSRDSSGGGGGGGGGDRGA) are disordered. A compositionally biased stretch (gly residues) spans 38 to 50 (SGGGGGGGGGDRG). N6-acetyllysine is present on residues lysine 452, lysine 519, lysine 653, and lysine 669. Residue lysine 759 is modified to N6-(pyridoxal phosphate)lysine.

It belongs to the GcvP family. In terms of assembly, interacts with GCSH. Homodimer. The glycine cleavage system is composed of four proteins: P (GLDC), T (GCST), L (DLD) and H (GCSH). It depends on pyridoxal 5'-phosphate as a cofactor.

Its subcellular location is the mitochondrion. The catalysed reaction is N(6)-[(R)-lipoyl]-L-lysyl-[glycine-cleavage complex H protein] + glycine + H(+) = N(6)-[(R)-S(8)-aminomethyldihydrolipoyl]-L-lysyl-[glycine-cleavage complex H protein] + CO2. With respect to regulation, stimulated by lipoic acid. Inhibited in presence of methylamine. The glycine cleavage system catalyzes the degradation of glycine. The P protein (GLDC) binds the alpha-amino group of glycine through its pyridoxal phosphate cofactor; CO(2) is released and the remaining methylamine moiety is then transferred to the lipoamide cofactor of the H protein (GCSH). This is Glycine dehydrogenase (decarboxylating), mitochondrial from Mus musculus (Mouse).